Reading from the N-terminus, the 629-residue chain is tRNA uridine 5-carboxymethylaminomethyl modification enzyme MnmG (629 aa).

FAD-binding positions include 15–20 (GAGHAG), V127, and S182. The interval 203–226 (TPPRVKSSTIDYSKTEEQPGDDHP) is disordered. A compositionally biased stretch (basic and acidic residues) spans 215 to 226 (SKTEEQPGDDHP). 274 to 288 (GARYCPSIEDKIVRF) contributes to the NAD(+) binding site. FAD is bound at residue Q371.

It belongs to the MnmG family. In terms of assembly, homodimer. Heterotetramer of two MnmE and two MnmG subunits. The cofactor is FAD.

The protein resides in the cytoplasm. Its function is as follows. NAD-binding protein involved in the addition of a carboxymethylaminomethyl (cmnm) group at the wobble position (U34) of certain tRNAs, forming tRNA-cmnm(5)s(2)U34. This Listeria monocytogenes serovar 1/2a (strain ATCC BAA-679 / EGD-e) protein is tRNA uridine 5-carboxymethylaminomethyl modification enzyme MnmG.